Reading from the N-terminus, the 458-residue chain is Glutamyl-tRNA(Gln) amidotransferase subunit D (458 aa).

Residues 97–434 (PNVSVMSTGG…KEVERLMRTN (338 aa)) enclose the Asparaginase/glutaminase domain. Residues Thr107, Thr185, Asp186, and Lys264 contribute to the active site.

It belongs to the asparaginase 1 family. GatD subfamily. In terms of assembly, heterodimer of GatD and GatE.

The enzyme catalyses L-glutamyl-tRNA(Gln) + L-glutamine + ATP + H2O = L-glutaminyl-tRNA(Gln) + L-glutamate + ADP + phosphate + H(+). Its function is as follows. Allows the formation of correctly charged Gln-tRNA(Gln) through the transamidation of misacylated Glu-tRNA(Gln) in organisms which lack glutaminyl-tRNA synthetase. The reaction takes place in the presence of glutamine and ATP through an activated gamma-phospho-Glu-tRNA(Gln). The GatDE system is specific for glutamate and does not act on aspartate. The protein is Glutamyl-tRNA(Gln) amidotransferase subunit D of Methanopyrus kandleri (strain AV19 / DSM 6324 / JCM 9639 / NBRC 100938).